The following is a 572-amino-acid chain: MRTSQYLLSTQKETPADAEVISHQLMLRAGMIRKLASGLYTWLPTGVRVLKKVENIVREEMNNAGAIEVSMPVVQPADLWQESGRWEQYGPELLRFVDRGERPFVLGPTHEEVITDLIRGEINSYKQLPLNFFQIQTKFRDEVRPRFGVMRAREFLMKDAYSFHTTQESLQETYDAMYTAYSKIFSRMDLNFRAVLADTGSIGGSASHEFQVLAESGEDDIVFSTGSDYAANIEFAEALAPTEPRAPATEELRIVDTPNAKTIAELVEQFKLPIEKTVKTLLVHAHEESGHKLVALLVRGDHDLNEIKAEKLPQVAKPLTFASEEEIRAAIGAGPGSLGPVNLSLPVIADRSVAVMSDFGAGANIDGKHYFGINWERDLALPLVADLRNVVEGDISPDGKGTLQIKRGIEVGHIFQLGTKYSEAMKATVQGEDGRNQVMTMGCYGIGVSRVVAAAIEQNHDDRGIIWPDAIAPFQVAILPMNMHKSFRVKELAEELYTTLRSHGIDVILDDRKERPGVMFADMELIGVPHNIVIGDRNLDSEEVEYKNRRVGEKQMIKTSEIVEFLLSQIKR.

The protein belongs to the class-II aminoacyl-tRNA synthetase family. ProS type 1 subfamily. Homodimer.

It is found in the cytoplasm. The enzyme catalyses tRNA(Pro) + L-proline + ATP = L-prolyl-tRNA(Pro) + AMP + diphosphate. Its function is as follows. Catalyzes the attachment of proline to tRNA(Pro) in a two-step reaction: proline is first activated by ATP to form Pro-AMP and then transferred to the acceptor end of tRNA(Pro). As ProRS can inadvertently accommodate and process non-cognate amino acids such as alanine and cysteine, to avoid such errors it has two additional distinct editing activities against alanine. One activity is designated as 'pretransfer' editing and involves the tRNA(Pro)-independent hydrolysis of activated Ala-AMP. The other activity is designated 'posttransfer' editing and involves deacylation of mischarged Ala-tRNA(Pro). The misacylated Cys-tRNA(Pro) is not edited by ProRS. The polypeptide is Proline--tRNA ligase (Yersinia pseudotuberculosis serotype O:1b (strain IP 31758)).